The primary structure comprises 368 residues: Phospho-N-acetylmuramoyl-pentapeptide-transferase (368 aa).

The next 9 helical transmembrane spans lie at 2 to 22 (IALI…TPLL), 51 to 71 (TLGG…SALY), 80 to 100 (PSWS…LGFI), 117 to 137 (GGKF…ALLI), 167 to 187 (VAII…TNAV), 193 to 213 (LDGL…IIAF), 234 to 254 (PLDL…FLWY), 271 to 291 (LGGL…AVVL), and 340 to 360 (FWMI…GDWV).

This sequence belongs to the glycosyltransferase 4 family. MraY subfamily. It depends on Mg(2+) as a cofactor.

The protein resides in the cell membrane. It carries out the reaction UDP-N-acetyl-alpha-D-muramoyl-L-alanyl-gamma-D-glutamyl-meso-2,6-diaminopimeloyl-D-alanyl-D-alanine + di-trans,octa-cis-undecaprenyl phosphate = di-trans,octa-cis-undecaprenyl diphospho-N-acetyl-alpha-D-muramoyl-L-alanyl-D-glutamyl-meso-2,6-diaminopimeloyl-D-alanyl-D-alanine + UMP. It functions in the pathway cell wall biogenesis; peptidoglycan biosynthesis. In terms of biological role, catalyzes the initial step of the lipid cycle reactions in the biosynthesis of the cell wall peptidoglycan: transfers peptidoglycan precursor phospho-MurNAc-pentapeptide from UDP-MurNAc-pentapeptide onto the lipid carrier undecaprenyl phosphate, yielding undecaprenyl-pyrophosphoryl-MurNAc-pentapeptide, known as lipid I. This chain is Phospho-N-acetylmuramoyl-pentapeptide-transferase, found in Bifidobacterium longum (strain DJO10A).